Here is a 251-residue protein sequence, read N- to C-terminus: Ditrans,polycis-undecaprenyl-diphosphate synthase ((2E,6E)-farnesyl-diphosphate specific) (251 aa).

Asp19 is an active-site residue. Position 19 (Asp19) interacts with Mg(2+). Residues 20–23 (GNNR), Trp24, His36, and 64–66 (SSE) each bind substrate. Catalysis depends on Asn67, which acts as the Proton acceptor. Substrate is bound by residues Trp68, Arg70, Arg187, and 193-195 (RIS). Position 206 (Glu206) interacts with Mg(2+).

This sequence belongs to the UPP synthase family. Homodimer. It depends on Mg(2+) as a cofactor.

It carries out the reaction 8 isopentenyl diphosphate + (2E,6E)-farnesyl diphosphate = di-trans,octa-cis-undecaprenyl diphosphate + 8 diphosphate. Catalyzes the sequential condensation of isopentenyl diphosphate (IPP) with (2E,6E)-farnesyl diphosphate (E,E-FPP) to yield (2Z,6Z,10Z,14Z,18Z,22Z,26Z,30Z,34E,38E)-undecaprenyl diphosphate (di-trans,octa-cis-UPP). UPP is the precursor of glycosyl carrier lipid in the biosynthesis of bacterial cell wall polysaccharide components such as peptidoglycan and lipopolysaccharide. This is Ditrans,polycis-undecaprenyl-diphosphate synthase ((2E,6E)-farnesyl-diphosphate specific) from Pseudomonas aeruginosa (strain ATCC 15692 / DSM 22644 / CIP 104116 / JCM 14847 / LMG 12228 / 1C / PRS 101 / PAO1).